A 143-amino-acid polypeptide reads, in one-letter code: Protein STIG1 (143 aa).

The first 23 residues, 1–23 (MDFIILLIAILALSSTPITIISG), serve as a signal peptide directing secretion. Residues 76–87 (RTCCFNYFCVDL) are sufficient for PI(4)P binding. Positions 80–83 (FNYF) are sufficient for binding to the extracellular domain of PRK2. Residues 88-115 (FTNRFNCGSCGLVCIVGTRCCGGICVDI) form a sufficient for PI(3)P binding region.

Belongs to the STIG1 family. Interacts with PRK1 and PRK2 (via extracellular domain). As to expression, expressed in the stigma and the upper section of the style.

The protein localises to the secreted. It is found in the extracellular space. It localises to the apoplast. Functionally, promotes pollen tube growth. A C-terminal peptide is cleaved from the propeptide in the stigmatic exudate and represent the major form of STIG1. Binds phosphoinositol lipids. The binding of external phosphatidylinositol 3-phosphate (PI(3)P) and PRK2 by STIG1 induces a rapid intracellular reactive oxygen species elevation. The polypeptide is Protein STIG1 (Solanum lycopersicum (Tomato)).